Consider the following 553-residue polypeptide: Arginine--tRNA ligase (553 aa).

The 'HIGH' region signature appears at 132–140 (PTGDLHIGH).

It belongs to the class-I aminoacyl-tRNA synthetase family. As to quaternary structure, monomer.

Its subcellular location is the cytoplasm. It catalyses the reaction tRNA(Arg) + L-arginine + ATP = L-arginyl-tRNA(Arg) + AMP + diphosphate. The sequence is that of Arginine--tRNA ligase from Staphylococcus aureus (strain Mu50 / ATCC 700699).